A 386-amino-acid chain; its full sequence is Prostacyclin receptor (386 aa).

The Extracellular portion of the chain corresponds to 1-16 (MADSCRNLTYVRGSVG). 2 cysteine pairs are disulfide-bonded: cysteine 5–cysteine 165 and cysteine 92–cysteine 170. Asparagine 7 is a glycosylation site (N-linked (GlcNAc...) asparagine). A helical transmembrane segment spans residues 17–38 (PATSTLMFVAGVVGNGLALGIL). Residues 39–51 (SARRPARPSAFAV) are Cytoplasmic-facing. Residues 52-76 (LVTGLAATDLLGTSFLSPAVFVAYA) form a helical membrane-spanning segment. Residues 77 to 94 (RNSSLLGLARGGPALCDA) lie on the Extracellular side of the membrane. A helical transmembrane segment spans residues 95 to 115 (FAFAMTFFGLASMLILFAMAV). Over 116 to 134 (ERCLALSHPYLYAQLDGPR) the chain is Cytoplasmic. The helical transmembrane segment at 135-158 (CARLALPAIYAFCVLFCALPLLGL) threads the bilayer. The Extracellular portion of the chain corresponds to 159-181 (GQHQQYCPGSWCFLRMRWAQPGG). A helical membrane pass occupies residues 182–208 (AAFSLAYAGLVALLVAAIFLCNGSVTL). Residues 209–235 (SLCRMYRQQKRHQGSLGPRPRTGEDEV) lie on the Cytoplasmic side of the membrane. A helical transmembrane segment spans residues 236-260 (DHLILLALMTVVMAVCSLPLTIRCF). At 261-274 (TQAVAPDSSSEMGD) the chain is on the extracellular side. The chain crosses the membrane as a helical span at residues 275 to 295 (LLAFRFYAFNPILDPWVFILF). Residues 296–386 (RKAVFQRLKL…AEASVACSLC (91 aa)) are Cytoplasmic-facing. The tract at residues 322-376 (PLSQLASGRRDPRAPSAPVGKEGSCVPLSAWGEGQVEPLPPTQQSSGSAVGTSSK) is disordered. Residues 363–376 (TQQSSGSAVGTSSK) are compositionally biased toward polar residues. Cysteine methyl ester is present on cysteine 383. The S-farnesyl cysteine moiety is linked to residue cysteine 383. The propeptide at 384–386 (SLC) is removed in mature form.

This sequence belongs to the G-protein coupled receptor 1 family. Interacts (non-isoprenylated C-terminus) with PDZK1. Isoprenylation does not influence ligand binding but is required for efficient coupling to the effectors adenylyl cyclase and phospholipase C.

Its subcellular location is the cell membrane. Receptor for prostacyclin (prostaglandin I2 or PGI2). The activity of this receptor is mediated by G(s) proteins which activate adenylate cyclase. In Homo sapiens (Human), this protein is Prostacyclin receptor (PTGIR).